The sequence spans 201 residues: MALVPMVVEQTNRGERSYDIYSRLLKERIIFLTGAVEDHMATLVCAQLLFLEAENPKKEIALYINSPGGVVTAGMAIYDTMQFIKPAVSTLCIGQAASMGSLLLAAGHKDMRFATPNSRIMVHQPSGGFQGQASDIERHARDILKMKRRLNEVYVKHTGRTYEEVEKTLDRDHFMDADEAQSWGVIDKVLTSRLEMEGEQA.

Ser98 (nucleophile) is an active-site residue. His123 is an active-site residue.

The protein belongs to the peptidase S14 family. In terms of assembly, fourteen ClpP subunits assemble into 2 heptameric rings which stack back to back to give a disk-like structure with a central cavity, resembling the structure of eukaryotic proteasomes.

The protein resides in the cytoplasm. The catalysed reaction is Hydrolysis of proteins to small peptides in the presence of ATP and magnesium. alpha-casein is the usual test substrate. In the absence of ATP, only oligopeptides shorter than five residues are hydrolyzed (such as succinyl-Leu-Tyr-|-NHMec, and Leu-Tyr-Leu-|-Tyr-Trp, in which cleavage of the -Tyr-|-Leu- and -Tyr-|-Trp bonds also occurs).. Functionally, cleaves peptides in various proteins in a process that requires ATP hydrolysis. Has a chymotrypsin-like activity. Plays a major role in the degradation of misfolded proteins. This Rhizobium johnstonii (strain DSM 114642 / LMG 32736 / 3841) (Rhizobium leguminosarum bv. viciae) protein is ATP-dependent Clp protease proteolytic subunit 2.